A 232-amino-acid chain; its full sequence is Sugar fermentation stimulation protein homolog (232 aa).

This sequence belongs to the SfsA family.

The protein is Sugar fermentation stimulation protein homolog of Pyrobaculum arsenaticum (strain DSM 13514 / JCM 11321 / PZ6).